The chain runs to 170 residues: Cyclic pyranopterin monophosphate synthase (170 aa).

The segment at 1-25 (MADPSTLTHPDPEGGVRMMDASQKS) is disordered. Substrate-binding positions include 78–80 (LCH) and 116–117 (ME). The active site involves Asp-131.

It belongs to the MoaC family. As to quaternary structure, homohexamer; trimer of dimers.

The enzyme catalyses (8S)-3',8-cyclo-7,8-dihydroguanosine 5'-triphosphate = cyclic pyranopterin phosphate + diphosphate. It participates in cofactor biosynthesis; molybdopterin biosynthesis. Its function is as follows. Catalyzes the conversion of (8S)-3',8-cyclo-7,8-dihydroguanosine 5'-triphosphate to cyclic pyranopterin monophosphate (cPMP). The chain is Cyclic pyranopterin monophosphate synthase from Salinibacter ruber (strain DSM 13855 / M31).